A 1355-amino-acid chain; its full sequence is Phospholipid-transporting ATPase DRS2 (1355 aa).

Residues 1–15 (MNDDRETPPKRKPGE) are compositionally biased toward basic and acidic residues. The segment at 1-50 (MNDDRETPPKRKPGEDDTLFDIDFLDDTTSHSGSRSKVTNSHANANYIPP) is disordered. The interval 1 to 104 (MNDDRETPPK…SDAYQPQSLR (104 aa)) is involved in autoinhibition. At 1 to 221 (MNDDRETPPK…TFLPKFLFQE (221 aa)) the chain is on the cytoplasmic side. A compositionally biased stretch (acidic residues) spans 16–26 (DDTLFDIDFLD). A compositionally biased stretch (polar residues) spans 30 to 44 (SHSGSRSKVTNSHAN). Position 102 is a phosphoserine (Ser-102). Residues 222 to 242 (FSKYANLFFLCTSAIQQVPHV) traverse the membrane as a helical segment. Residues 237 to 238 (QQ) are involved in phosphatidylserine substrate recognition. The Lumenal segment spans residues 243 to 246 (SPTN). The chain crosses the membrane as a helical span at residues 247 to 267 (RYTTIGTLLVVLIVSAMKECI). The Cytoplasmic segment spans residues 268–449 (EDIKRANSDK…VEKIINRQII (182 aa)). Residues 450 to 470 (ALFTVLIVLILISSIGNVIMS) form a helical membrane-spanning segment. Residues 471 to 490 (TADAKHLSYLYLEGTNKAGL) lie on the Lumenal side of the membrane. The chain crosses the membrane as a helical span at residues 491-511 (FFKDFLTFWILFSNLVPISLF). Residues 512–1012 (VTVELIKYYQ…WSYQRISVAI (501 aa)) are Cytoplasmic-facing. The active-site 4-aspartylphosphate intermediate is Asp-560. Residues Asp-560, Lys-561, Thr-562, Glu-655, Phe-698, Ser-700, Lys-703, Lys-721, Arg-755, Thr-756, Thr-835, Gly-836, Asp-837, Arg-928, and Lys-934 each coordinate ATP. Asp-560 serves as a coordination point for Mg(2+). Thr-562 contacts Mg(2+). A Mg(2+)-binding site is contributed by Asp-954. Positions 957 and 958 each coordinate ATP. Asp-958 lines the Mg(2+) pocket. The chain crosses the membrane as a helical span at residues 1013-1033 (LYSFYKNTALYMTQFWYVFAN). Residues 1034 to 1043 (AFSGQSIMES) are Lumenal-facing. Residues 1044–1064 (WTMSFYNLFFTVWPPFVIGVF) traverse the membrane as a helical segment. At 1065–1094 (DQFVSSRLLERYPQLYKLGQKGQFFSVYIF) the chain is on the cytoplasmic side. A helical transmembrane segment spans residues 1095 to 1115 (WGWIINGFFHSAIVFIGTILI). Residues 1116–1131 (YRYGFALNMHGELADH) are Lumenal-facing. Residues 1132-1152 (WSWGVTVYTTSVIIVLGKAAL) form a helical membrane-spanning segment. Residue Lys-1149 participates in a 1,2-diacyl-sn-glycero-3-phospho-(1D-myo-inositol 4-phosphate) binding. Over 1153–1161 (VTNQWTKFT) the chain is Cytoplasmic. The chain crosses the membrane as a helical span at residues 1162–1182 (LIAIPGSLLFWLIFFPIYASI). The Lumenal portion of the chain corresponds to 1183 to 1202 (FPHANISREYYGVVKHTYGS). A helical transmembrane segment spans residues 1203–1223 (GVFWLTLIVLPIFALVRDFLW). Arg-1219, Trp-1223, Lys-1224, Tyr-1235, and His-1236 together coordinate a 1,2-diacyl-sn-glycero-3-phospho-(1D-myo-inositol 4-phosphate). Residues 1224–1355 (KYYKRMYEPE…SSRDDISFDI (132 aa)) lie on the Cytoplasmic side of the membrane. The interval 1230-1282 (YEPETYHVIQEMQKYNISDSRPHVQQFQNAIRKVRQVQRMKKQRGFAFSQAEE) is interaction with GEA2. Positions 1231 to 1309 (EPETYHVIQE…KYGELQDASA (79 aa)) are involved in autoinhibition. Positions 1305-1355 (QDASANPFNDNNGLGSNDFESAEPFIENPFADGNQNSNRFSSSRDDISFDI) are disordered. Polar residues predominate over residues 1307–1323 (ASANPFNDNNGLGSNDF). The segment covering 1346–1355 (SSRDDISFDI) has biased composition (basic and acidic residues).

It belongs to the cation transport ATPase (P-type) (TC 3.A.3) family. Type IV subfamily. As to quaternary structure, component of a flippase complex consisting of DRS2 and CDC50. Interacts with CDC50; the interaction is direct, is required for their mutual export from the endoplasmic reticulum, and preferentially occurs when DRS2 is in the E2P state. Interacts (via C-terminus) with GEA2 (via SEC7 domain); the interaction is direct. Interacts with GEA1. Requires Mg(2+) as cofactor.

The protein resides in the golgi apparatus. Its subcellular location is the trans-Golgi network membrane. The protein localises to the endosome membrane. It carries out the reaction ATP + H2O + phospholipidSide 1 = ADP + phosphate + phospholipidSide 2.. The enzyme catalyses a 1,2-diacyl-sn-glycero-3-phospho-L-serine(out) + ATP + H2O = a 1,2-diacyl-sn-glycero-3-phospho-L-serine(in) + ADP + phosphate + H(+). It catalyses the reaction a 1,2-diacyl-sn-glycero-3-phosphoethanolamine(out) + ATP + H2O = a 1,2-diacyl-sn-glycero-3-phosphoethanolamine(in) + ADP + phosphate + H(+). With respect to regulation, allosterically activated by binding 1,2-diacyl-sn-glycero-3-phospho-(1D-myo-inositol 4-phosphate) (phosphatidylinositol 4-phosphate). Inhibited by orthovanadate, N-ethylmaleimide, trifluoroberyllate and tetrafluoroaluminate; orthovanadate and N-ethylmaleimide inhibit phosphorylation of the active site aspartic acid. The ATPase activity is not potently stimulated by phosphatidylinositol 3-phosphate and phosphatidylinositol 5-phosphate, phosphatidylinositol 4,5-bisphosphate or phosphatidylcholine. Not inhibited by azide. Its function is as follows. Catalytic component of a P4-ATPase flippase complex which catalyzes the hydrolysis of ATP coupled to the transport of phosphatidylserine and small amounts of ethanolamine from the lumen to the cytosolic leaflet of the trans-Golgi network and ensures the maintenance of asymmetric distribution of phospholipids. Contributes to clathrin-coated vesicle formation, endocytosis, and protein trafficking between the Golgi and endosomal system. Does not appear to transport phosphatidylcholine or sphingomyelin. The chain is Phospholipid-transporting ATPase DRS2 from Saccharomyces cerevisiae (strain ATCC 204508 / S288c) (Baker's yeast).